Consider the following 507-residue polypeptide: ATP synthase subunit alpha, chloroplastic (507 aa).

170–177 (GDRQTGKT) contributes to the ATP binding site.

The protein belongs to the ATPase alpha/beta chains family. In terms of assembly, F-type ATPases have 2 components, CF(1) - the catalytic core - and CF(0) - the membrane proton channel. CF(1) has five subunits: alpha(3), beta(3), gamma(1), delta(1), epsilon(1). CF(0) has four main subunits: a, b, b' and c.

Its subcellular location is the plastid. It localises to the chloroplast thylakoid membrane. It catalyses the reaction ATP + H2O + 4 H(+)(in) = ADP + phosphate + 5 H(+)(out). Its function is as follows. Produces ATP from ADP in the presence of a proton gradient across the membrane. The alpha chain is a regulatory subunit. This Ceratophyllum demersum (Rigid hornwort) protein is ATP synthase subunit alpha, chloroplastic.